Here is a 167-residue protein sequence, read N- to C-terminus: Small ribosomal subunit protein uS5 (167 aa).

Positions 11–74 constitute an S5 DRBM domain; sequence LQEKLIAVNR…EKARRNMINV (64 aa).

This sequence belongs to the universal ribosomal protein uS5 family. In terms of assembly, part of the 30S ribosomal subunit. Contacts proteins S4 and S8.

In terms of biological role, with S4 and S12 plays an important role in translational accuracy. Located at the back of the 30S subunit body where it stabilizes the conformation of the head with respect to the body. The chain is Small ribosomal subunit protein uS5 from Klebsiella pneumoniae subsp. pneumoniae (strain ATCC 700721 / MGH 78578).